We begin with the raw amino-acid sequence, 131 residues long: Small ribosomal subunit protein uS8 (131 aa).

This sequence belongs to the universal ribosomal protein uS8 family. In terms of assembly, part of the 30S ribosomal subunit. Contacts proteins S5 and S12.

Functionally, one of the primary rRNA binding proteins, it binds directly to 16S rRNA central domain where it helps coordinate assembly of the platform of the 30S subunit. In Campylobacter lari (strain RM2100 / D67 / ATCC BAA-1060), this protein is Small ribosomal subunit protein uS8.